The chain runs to 149 residues: Large ribosomal subunit protein eL24A (149 aa).

Composition is skewed to basic and acidic residues over residues K93–A102 and K116–A125. The tract at residues K93–H149 is disordered.

It belongs to the eukaryotic ribosomal protein eL24 family. Component of the large ribosomal subunit (LSU). Mature yeast ribosomes consist of a small (40S) and a large (60S) subunit. The 40S small subunit contains 1 molecule of ribosomal RNA (18S rRNA) and at least 33 different proteins. The large 60S subunit contains 3 rRNA molecules (25S, 5.8S and 5S rRNA) and at least 46 different proteins.

It localises to the cytoplasm. Functionally, component of the ribosome, a large ribonucleoprotein complex responsible for the synthesis of proteins in the cell. The small ribosomal subunit (SSU) binds messenger RNAs (mRNAs) and translates the encoded message by selecting cognate aminoacyl-transfer RNA (tRNA) molecules. The large subunit (LSU) contains the ribosomal catalytic site termed the peptidyl transferase center (PTC), which catalyzes the formation of peptide bonds, thereby polymerizing the amino acids delivered by tRNAs into a polypeptide chain. The nascent polypeptides leave the ribosome through a tunnel in the LSU and interact with protein factors that function in enzymatic processing, targeting, and the membrane insertion of nascent chains at the exit of the ribosomal tunnel. The protein is Large ribosomal subunit protein eL24A (rpl2401) of Schizosaccharomyces pombe (strain 972 / ATCC 24843) (Fission yeast).